The primary structure comprises 287 residues: PsbP domain-containing protein 1, chloroplastic (287 aa).

Belongs to the PsbP family. In terms of assembly, partially associated with photosystem I (PSI) complex, but is not a subunit of the complex. Interacts with PsaA and PsaB, but not with PasF.

It localises to the plastid. The protein localises to the chloroplast thylakoid lumen. Its function is as follows. Photosystem I assembly factor that assists the proper folding and integration of PsaB and PsaA into the thylakoid membrane. This Arabidopsis thaliana (Mouse-ear cress) protein is PsbP domain-containing protein 1, chloroplastic (PPD1).